Here is a 164-residue protein sequence, read N- to C-terminus: MRCPKCNYHKSSVVDSRQAEDGNTIRRRRECEQCHTRFTTFERVEELPLLVIKKDGTREQFSRDKILNGVVQSAQKRPVSSTDIENVISRIEQEVRTTYENEVSSTAIGNLVMDELAELDEITYVRFASVYKSFKDVDEIEELLQQITNRVRGKKKRLNNDETN.

A zinc finger lies at 3 to 34 (CPKCNYHKSSVVDSRQAEDGNTIRRRRECEQC). Residues 49 to 139 (LLVIKKDGTR…VYKSFKDVDE (91 aa)) form the ATP-cone domain.

It belongs to the NrdR family. The cofactor is Zn(2+).

Its function is as follows. Negatively regulates transcription of bacterial ribonucleotide reductase nrd genes and operons by binding to NrdR-boxes. The polypeptide is Transcriptional repressor NrdR (Streptococcus pyogenes serotype M5 (strain Manfredo)).